We begin with the raw amino-acid sequence, 31 residues long: Cytochrome b6-f complex subunit 6 (31 aa).

The helical transmembrane segment at 4-26 threads the bilayer; sequence LTSYFGFLLAALTITSALFIGLS.

The protein belongs to the PetL family. As to quaternary structure, the 4 large subunits of the cytochrome b6-f complex are cytochrome b6, subunit IV (17 kDa polypeptide, PetD), cytochrome f and the Rieske protein, while the 4 small subunits are PetG, PetL, PetM and PetN. The complex functions as a dimer.

Its subcellular location is the plastid. It is found in the chloroplast thylakoid membrane. Its function is as follows. Component of the cytochrome b6-f complex, which mediates electron transfer between photosystem II (PSII) and photosystem I (PSI), cyclic electron flow around PSI, and state transitions. PetL is important for photoautotrophic growth as well as for electron transfer efficiency and stability of the cytochrome b6-f complex. This is Cytochrome b6-f complex subunit 6 from Aethionema grandiflorum (Persian stone-cress).